The primary structure comprises 364 residues: Chaperone protein DnaJ (364 aa).

Residues Asp5–Gly71 form the J domain. A CR-type zinc finger spans residues Gly127–Gln205. Zn(2+) is bound by residues Cys140, Cys143, Cys157, Cys160, Cys179, Cys182, Cys193, and Cys196. CXXCXGXG motif repeat units follow at residues Cys140 to Gly147, Cys157 to Gly164, Cys179 to Gly186, and Cys193 to Gly200.

This sequence belongs to the DnaJ family. As to quaternary structure, homodimer. Zn(2+) is required as a cofactor.

It localises to the cytoplasm. Its function is as follows. Participates actively in the response to hyperosmotic and heat shock by preventing the aggregation of stress-denatured proteins and by disaggregating proteins, also in an autonomous, DnaK-independent fashion. Unfolded proteins bind initially to DnaJ; upon interaction with the DnaJ-bound protein, DnaK hydrolyzes its bound ATP, resulting in the formation of a stable complex. GrpE releases ADP from DnaK; ATP binding to DnaK triggers the release of the substrate protein, thus completing the reaction cycle. Several rounds of ATP-dependent interactions between DnaJ, DnaK and GrpE are required for fully efficient folding. Also involved, together with DnaK and GrpE, in the DNA replication of plasmids through activation of initiation proteins. The sequence is that of Chaperone protein DnaJ from Ruthia magnifica subsp. Calyptogena magnifica.